We begin with the raw amino-acid sequence, 237 residues long: Ribonuclease 3 (237 aa).

The 130-residue stretch at 4 to 133 (LTELENSLGV…VLAAIYIDKG (130 aa)) folds into the RNase III domain. Residue glutamate 46 coordinates Mg(2+). Catalysis depends on residues aspartate 50 and glutamate 122. A Mg(2+)-binding site is contributed by glutamate 122. The region spanning 160–229 (DYKSRLQELI…AKVALQQFEN (70 aa)) is the DRBM domain.

Belongs to the ribonuclease III family. In terms of assembly, homodimer. It depends on Mg(2+) as a cofactor.

Its subcellular location is the cytoplasm. It carries out the reaction Endonucleolytic cleavage to 5'-phosphomonoester.. Functionally, digests double-stranded RNA. Involved in the processing of primary rRNA transcript to yield the immediate precursors to the large and small rRNAs (23S and 16S). Processes some mRNAs, and tRNAs when they are encoded in the rRNA operon. Processes pre-crRNA and tracrRNA of type II CRISPR loci if present in the organism. This is Ribonuclease 3 from Dehalococcoides mccartyi (strain CBDB1).